Reading from the N-terminus, the 351-residue chain is Photosystem II D2 protein (351 aa).

Residues 39 to 59 (CAFLALGGWLTGTTFVTSWYT) form a helical membrane-spanning segment. Residue His116 coordinates chlorophyll a. A helical membrane pass occupies residues 123 to 139 (GFMLRQFEIARLVGIRP). Positions 128 and 141 each coordinate pheophytin a. Residues 151–164 (VFVSVFLMYPLGQS) form a helical membrane-spanning segment. His196 lines the chlorophyll a pocket. Residues 206–226 (GALLCAIHGATVENTLFEDGE) traverse the membrane as a helical segment. A plastoquinone is bound by residues His213 and Phe260. His213 is a binding site for Fe cation. A Fe cation-binding site is contributed by His267. The chain crosses the membrane as a helical span at residues 277–293 (GLWMSAVGIVGLALNLR).

This sequence belongs to the reaction center PufL/M/PsbA/D family. PSII is composed of 1 copy each of membrane proteins PsbA, PsbB, PsbC, PsbD, PsbE, PsbF, PsbH, PsbI, PsbJ, PsbK, PsbL, PsbM, PsbT, PsbX, PsbY, PsbZ, Psb30/Ycf12, peripheral proteins PsbO, CyanoQ (PsbQ), PsbU, PsbV and a large number of cofactors. It forms dimeric complexes. The D1/D2 heterodimer binds P680, chlorophylls that are the primary electron donor of PSII, and subsequent electron acceptors. It shares a non-heme iron and each subunit binds pheophytin, quinone, additional chlorophylls, carotenoids and lipids. There is also a Cl(-1) ion associated with D1 and D2, which is required for oxygen evolution. The PSII complex binds additional chlorophylls, carotenoids and specific lipids. serves as cofactor.

Its subcellular location is the cellular thylakoid membrane. The catalysed reaction is 2 a plastoquinone + 4 hnu + 2 H2O = 2 a plastoquinol + O2. Photosystem II (PSII) is a light-driven water:plastoquinone oxidoreductase that uses light energy to abstract electrons from H(2)O, generating O(2) and a proton gradient subsequently used for ATP formation. It consists of a core antenna complex that captures photons, and an electron transfer chain that converts photonic excitation into a charge separation. The D1/D2 (PsbA/PsbD) reaction center heterodimer binds P680, the primary electron donor of PSII as well as several subsequent electron acceptors. D2 is needed for assembly of a stable PSII complex. The chain is Photosystem II D2 protein from Nostoc sp. (strain PCC 7120 / SAG 25.82 / UTEX 2576).